Reading from the N-terminus, the 396-residue chain is Interleukin enhancer-binding factor 2 homolog (396 aa).

The region spanning 22-379 is the DZF domain; it reads KTFVPRHPFD…KKEGDLEEDI (358 aa). Residues 367-396 form a disordered region; sequence PTDKKEGDLEEDIDMIENENEEEGSDDGAE. Over residues 374 to 396 the composition is skewed to acidic residues; sequence DLEEDIDMIENENEEEGSDDGAE.

The protein resides in the nucleus. Its function is as follows. May regulate transcription of undefined genes. The protein is Interleukin enhancer-binding factor 2 homolog of Drosophila melanogaster (Fruit fly).